The following is a 44-amino-acid chain: Photosystem II reaction center protein K (44 aa).

The propeptide occupies 1–7; sequence METLLLS. Residues 23-43 traverse the membrane as a helical segment; the sequence is LPIIPVFFLLLAFVWQAAIGF.

This sequence belongs to the PsbK family. PSII is composed of 1 copy each of membrane proteins PsbA, PsbB, PsbC, PsbD, PsbE, PsbF, PsbH, PsbI, PsbJ, PsbK, PsbL, PsbM, PsbT, PsbX, PsbY, PsbZ, Psb30/Ycf12, at least 3 peripheral proteins of the oxygen-evolving complex and a large number of cofactors. It forms dimeric complexes.

Its subcellular location is the plastid. The protein resides in the chloroplast thylakoid membrane. Its function is as follows. One of the components of the core complex of photosystem II (PSII). PSII is a light-driven water:plastoquinone oxidoreductase that uses light energy to abstract electrons from H(2)O, generating O(2) and a proton gradient subsequently used for ATP formation. It consists of a core antenna complex that captures photons, and an electron transfer chain that converts photonic excitation into a charge separation. The chain is Photosystem II reaction center protein K from Phaeodactylum tricornutum (strain CCAP 1055/1).